A 420-amino-acid polypeptide reads, in one-letter code: Mannose-1-phosphate guanylyltransferase regulatory subunit alpha (420 aa).

Residues 2–251 are substrate-binding domain; sequence LKAVILIGGP…DGIWSQIKSA (250 aa). Glu85 and Gln247 together coordinate GDP-alpha-D-mannose. The tract at residues 273–420 is hexapeptide repeat domain; that stretch reads LARHTAGGPR…SRSFTNQIIL (148 aa). The tract at residues 356–384 is C-loop; sequence TPNDPNPNDPRARMDSESLFKDGKLLPAI.

This sequence belongs to the transferase hexapeptide repeat family. Component of the GMPPA-GMPPB mannose-1-phosphate guanylyltransferase complex composed of 4 GMPPA subunits and 8 GMPPB subunits; the complex is organized into three layers, a central layer made up of 2 GMPPA dimers sandwiched between two layers each made up of 2 GMPPB dimers.

The protein localises to the cytoplasm. Its function is as follows. Regulatory subunit of the GMPPA-GMPPB mannose-1-phosphate guanylyltransferase complex; reduces the catalytic activity of GMPPB when part of the complex. Mediates allosteric feedback inhibition of GMPPB catalytic activity upon binding GDP-alpha-D-mannose. Together with GMPPB regulates GDP-alpha-D-mannose levels. This Rattus norvegicus (Rat) protein is Mannose-1-phosphate guanylyltransferase regulatory subunit alpha (Gmppa).